The chain runs to 438 residues: ATP-dependent RNA helicase RhlB (438 aa).

Residues Gln9–Ala37 carry the Q motif motif. The 180-residue stretch at Leu40 to Val219 folds into the Helicase ATP-binding domain. Residue Ala53–Thr60 participates in ATP binding. The short motif at Asp165–Asp168 is the DEAD box element. Positions Lys243–Leu390 constitute a Helicase C-terminal domain. The interval Thr395–Ser438 is disordered. The span at Pro428–Ser438 shows a compositional bias: basic residues.

Belongs to the DEAD box helicase family. RhlB subfamily. In terms of assembly, component of the RNA degradosome, which is a multiprotein complex involved in RNA processing and mRNA degradation.

The protein localises to the cytoplasm. It carries out the reaction ATP + H2O = ADP + phosphate + H(+). DEAD-box RNA helicase involved in RNA degradation. Has RNA-dependent ATPase activity and unwinds double-stranded RNA. The polypeptide is ATP-dependent RNA helicase RhlB (Shewanella baltica (strain OS185)).